The following is a 452-amino-acid chain: Probable splicing factor, arginine/serine-rich 7 (452 aa).

RRM domains are found at residues 10–91 (KILH…YPNP) and 163–240 (RTVY…HSRV). The interval 258–452 (EEAIRMGRNG…GNGDVVMASE (195 aa)) is disordered. Positions 259 to 272 (EAIRMGRNGDDRDR) are enriched in basic and acidic residues. Residues 273 to 290 (RRSRSPRRRRSPSPRRRR) are compositionally biased toward basic residues. Basic and acidic residues predominate over residues 291–305 (DSRDRDRDRDRDRRR). 3 stretches are compositionally biased toward basic residues: residues 323-335 (KRSR…RRSR), 345-360 (KRSR…KSRD), and 370-382 (SKDR…RSRS). A compositionally biased stretch (basic and acidic residues) spans 383–421 (RSPEKRRDKEDRKTEKKENENESSLREKLLEKKAARKDS).

Belongs to the splicing factor SR family. Post-translationally, extensively phosphorylated on serine residues in the RS domain.

Its subcellular location is the nucleus. In Caenorhabditis elegans, this protein is Probable splicing factor, arginine/serine-rich 7 (rsp-7).